A 1579-amino-acid chain; its full sequence is Eukaryotic translation initiation factor 4 gamma 3 (1579 aa).

Disordered regions lie at residues 1-35 (MNSQ…RPGV) and 128-326 (TQQQ…GPSL). Positions 10–25 (PFFQRPQIQPPRAAIP) are enriched in low complexity. Residues 26–35 (NSSPSIRPGV) are compositionally biased toward polar residues. The tract at residues 134-162 (PAKREKKTIRIRDPNQGGKDITEEIMSGG) is PABPC1-binding. The segment covering 167–183 (PTPPIGRPASTPTPPQQ) has biased composition (pro residues). At T168 the chain carries Phosphothreonine. Phosphoserine is present on residues S230, S232, and S267. A compositionally biased stretch (low complexity) spans 266-292 (SSPTSLPPLARSSLPSPMSAALSSQPL). A compositionally biased stretch (basic and acidic residues) spans 295–308 (AEDKCELPSSKEED). Residues 315 to 326 (PTSCTAASGPSL) show a composition bias toward polar residues. 4 positions are modified to phosphoserine: S436, S470, S472, and S490. Positions 454 to 470 (RTCLSKDAKEMQDKAES) are enriched in basic and acidic residues. Disordered stretches follow at residues 454 to 615 (RTCL…DTEG), 681 to 706 (RQTP…QRRE), and 724 to 744 (AENA…PESI). The span at 471–480 (ESDGQAEETA) shows a compositional bias: acidic residues. Polar residues predominate over residues 481–501 (DPQSLHSGRSPAPVQTATTAP). 2 stretches are compositionally biased toward basic and acidic residues: residues 506–515 (KTKEQTRTPD) and 549–563 (SERD…KAEE). The segment covering 589–598 (SGSADSSADG) has biased composition (low complexity). Over residues 606 to 615 (ESWKPADTEG) the composition is skewed to basic and acidic residues. Residues 614–625 (EGKKQYDREFLL) form an EIF4E-binding region. The tract at residues 694-1014 (VGPRRSQPGQ…EQRKVQQLMT (321 aa)) is eIF3/EIF4A-binding. 5 HEAT repeats span residues 740–778 (DPES…LTVD), 779–826 (TEER…GNTV), 827–900 (NFRK…LKML), 901–939 (TEAI…DFEK), and 940–979 (AKPR…LCNW). The 229-residue stretch at 750–978 (FRKVRSILNK…QDVIDLRLCN (229 aa)) folds into the MIF4G domain. Positions 855–871 (KELEAASAPEERTRLHD) are enriched in basic and acidic residues. Positions 855-875 (KELEAASAPEERTRLHDELEE) are disordered. Residues 989-1018 (KTIEQIHKEAKIEEQEEQRKVQQLMTKEKR) adopt a coiled-coil conformation. 2 disordered regions span residues 1009–1037 (VQQL…QGAK) and 1067–1214 (LGSW…LSEE). Residues 1086 to 1098 (LRSSASSLNRFSP) show a composition bias toward low complexity. Residue S1150 is modified to Phosphoserine; by CaMK1. Composition is skewed to basic and acidic residues over residues 1150–1169 (SSKD…EMLE) and 1179–1197 (DAER…ELAK). Residues 1154-1176 (LLDNQSQEEQRREMLETVKQLTG) are a coiled coil. S1212 is subject to Phosphoserine. The region spanning 1215 to 1337 (EVERKSKSII…SMRELIVEFS (123 aa)) is the MI domain. The stretch at 1406–1438 (SSEALSKKELSAEELSQRLEKLIMEEKADDERI) forms a coiled coil. The W2 domain maps to 1410–1579 (LSKKELSAEE…REAEEESEDN (170 aa)). The interval 1427–1579 (LIMEEKADDE…REAEEESEDN (153 aa)) is EIF4A-binding. The interval 1565 to 1579 (FFTWLREAEEESEDN) is necessary but not sufficient for MKNK1-binding.

The protein belongs to the eukaryotic initiation factor 4G family. As to quaternary structure, interacts with EIF4A, EIF4E, eIF3 and PABPC1. Part of a complex with EIF4E. eIF4F is a multi-subunit complex, the composition of which varies with external and internal environmental conditions. It is composed of at least EIF4A, EIF4E and EIF4G1/EIF4G3. EIF4G1/EIF4G3 interacts through its C-terminus with the serine/threonine kinases MKNK1, and with MKNK2. Appears to act as a scaffold protein, holding these enzymes in place to phosphorylate eIF4E. Non-phosphorylated EIF4EBP1 competes with EIF4G1/EIFG3 to interact with EIF4E; insulin stimulated MAP-kinase (MAPK1 and MAPK3) phosphorylation of EIF4EBP1 causes dissociation of the complex allowing EIF4G1/EIF4G3 to bind and consequent initiation of translation. EIF4G1/EIF4G3 interacts with PABPC1 to bring about circularization of the mRNA. Interacts with FXR1; promoting translation of FXR1 target mRNAs.

Functionally, component of the protein complex eIF4F, which is involved in the recognition of the mRNA cap, ATP-dependent unwinding of 5'-terminal secondary structure and recruitment of mRNA to the ribosome. Functional homolog of EIF4G1. This Mus musculus (Mouse) protein is Eukaryotic translation initiation factor 4 gamma 3 (Eif4g3).